Here is a 962-residue protein sequence, read N- to C-terminus: MSYHFNKIEEKWQKYWADNQTFKASNDSEKPKYYVLDMFPYPSGAGLHVGHPLGYIASDIYARFKRHKGFNVLHPQGYDSFGLPAEQYAIQTGQHPAVTTENNIARYREQLDKIGFSFDWSREVRTSEPDYYKWTQWIFIQLFESWYDQEAEKSRAITELEEIFTSEGNSRINAASDDDVEKFSADDWNACSEDEKEQILLKYRLTYLAEAEVNWCPQLGTVLANDEIVNGVSERGGYPVVRKKMTQWSMRISAFSERLLQDLNKIDWTESLKESQRNWIGKSVGAHVDFKIENSKFKIGVFTTRPDTIFGVSFMTLAPEHELVEKITTEDRKEEVQAYIEASAKRSERERMADVKTISGAFTGAYAEHPFTKKPVPIWIGDYVLAGYGTGAVMAVPCGDQRDHDFARHFDLLIPNIFENVDVSQEAYAGKEGTVIANSDFLSGLEYKEALNKVILELEKTGQGYGKTNYRLRDAVFSRQRYWGEPFPVYYVNGLPKMIDEKYLPLKLPEVEKYLPTETGEPPLGNATDWAWDSKNNKVVSNKVLKQSRKLSGQHDEPNSNVTPSAVEGSDDNGIYPLELNTMPGWAGSSWYLFRYMGAGNPDRFVSEEAQKYWENVDLYIGGSEHATGHLLYSRFWTKFLYDRGWLTVEEPFKKLINQGMILGTSAFVYRLEGENVFVSKNQINGNNVQPIHADVSLVNSSDELDIEGFKKWRPEFADAKFLTEDGKYIVGREVEKMSKSKYNVVNPDEICQDYGADTLRMYEMFLGPLEQAKPWNTAGITGVHNFLKKLWKLYYDGEEFFVSDEKASADSLKTFHKTIKKVTEDIEEFSFNTSVSTFMICVNELTAQKCNSREILEPLAVLIAPYAPHIAEELWEKLGNSESVTTAKYPEFEEKYLVESMKNYPVSFNGKMRFTMELSLDMSKEEIEKTVMADERTQKQLDGRTPKKVIVVPGKIVNIVG.

The 'HIGH' region motif lies at 40 to 51; the sequence is PYPSGAGLHVGH. Positions 548–570 are disordered; it reads SRKLSGQHDEPNSNVTPSAVEGS. The short motif at 737–741 is the 'KMSKS' region element; that stretch reads KMSKS. Position 740 (Lys-740) interacts with ATP.

This sequence belongs to the class-I aminoacyl-tRNA synthetase family.

It localises to the cytoplasm. The catalysed reaction is tRNA(Leu) + L-leucine + ATP = L-leucyl-tRNA(Leu) + AMP + diphosphate. This Christiangramia forsetii (strain DSM 17595 / CGMCC 1.15422 / KT0803) (Gramella forsetii) protein is Leucine--tRNA ligase.